The sequence spans 1423 residues: Serum albumin SDS-1 (1423 aa).

The N-terminal stretch at 1-23 (MGKAMLKLCITLMVLVFSGTAES) is a signal peptide. Positions 24 to 29 (KGVMRR) are excised as a propeptide. Albumin domains follow at residues 29–230 (REDE…EDFK), 231–426 (HKLT…EFKS), 427–608 (EVEK…SDFK), 609–811 (MDVE…SQAR), 812–1031 (QEAL…HTIH), 1032–1226 (MEIR…AIEK), and 1227–1422 (VIKD…AIKS). Cu cation is bound at residue His36. 16 cysteine pairs are disulfide-bonded: Cys42–Cys88, Cys87–Cys96, Cys109–Cys125, Cys124–Cys135, Cys167–Cys212, Cys211–Cys221, Cys244–Cys290, Cys289–Cys298, Cys311–Cys327, Cys326–Cys337, Cys363–Cys408, Cys407–Cys416, Cys439–Cys485, Cys484–Cys493, Cys506–Cys522, and Cys521–Cys532. N-linked (GlcNAc...) asparagine glycosylation occurs at Asn490. Asn541 carries an N-linked (GlcNAc...) asparagine glycan. Cystine bridges form between Cys556–Cys601, Cys622–Cys668, Cys667–Cys676, Cys689–Cys705, Cys704–Cys715, Cys747–Cys792, Cys791–Cys802, Cys825–Cys871, Cys870–Cys879, Cys892–Cys907, and Cys906–Cys947. N-linked (GlcNAc...) asparagine glycosylation is present at Asn652. Asn754 carries an N-linked (GlcNAc...) asparagine glycan. N-linked (GlcNAc...) asparagine glycosylation is found at Asn908 and Asn911. Residues 910 to 936 (SNTSTTTSTTTSTTTSTTTSTTTSTTS) are disordered. Repeat copies occupy residues 913–916 (STTT), 917–920 (STTT), 921–924 (STTT), 925–928 (STTT), 929–932 (STTT), 933–935 (STT), and 936–939 (STTT). Positions 913–939 (STTTSTTTSTTTSTTTSTTTSTTSTTT) are 7 X 4 AA tandem repeats of S-T-T-T. Residue Asn954 is glycosylated (N-linked (GlcNAc...) asparagine). 8 cysteine pairs are disulfide-bonded: Cys969–Cys1014, Cys1013–Cys1022, Cys1045–Cys1091, Cys1090–Cys1099, Cys1112–Cys1128, Cys1127–Cys1138, Cys1163–Cys1208, and Cys1207–Cys1216. N-linked (GlcNAc...) asparagine glycosylation is present at Asn1070. Residue Asn1236 is glycosylated (N-linked (GlcNAc...) asparagine). 6 cysteine pairs are disulfide-bonded: Cys1239-Cys1285, Cys1284-Cys1291, Cys1304-Cys1320, Cys1319-Cys1330, Cys1359-Cys1404, and Cys1403-Cys1412.

It belongs to the ALB/AFP/VDB family. In terms of tissue distribution, plasma.

Its subcellular location is the secreted. Its function is as follows. Serum albumin, the main protein of plasma, has a good binding capacity for water, Ca(2+), Na(+), K(+), fatty acids, hormones, bilirubin and drugs. Its main function is the regulation of the colloidal osmotic pressure of blood. In Petromyzon marinus (Sea lamprey), this protein is Serum albumin SDS-1 (SDS-1).